We begin with the raw amino-acid sequence, 302 residues long: Aurora/IPL1-related protein kinase 2 (302 aa).

Positions 1–17 (MENKPQILQTKSKNTPN) are enriched in polar residues. The segment at 1–23 (MENKPQILQTKSKNTPNKGGKLS) is disordered. Residues 27-277 (FEIGRPLGKG…LQEVKDHYWV (251 aa)) enclose the Protein kinase domain. Residues 33-41 (LGKGKFGSV) and lysine 56 each bind ATP. Aspartate 150 acts as the Proton acceptor in catalysis.

The protein belongs to the protein kinase superfamily. Ser/Thr protein kinase family. In terms of assembly, interacts with zen-4 and icp-1. Part of a complex containing at least air-2; icp-1; csc-1 and bir-1. Interacts with tlk-1 and bmk-1.

Its subcellular location is the cytoplasm. The protein localises to the cytoskeleton. It is found in the chromosome. The protein resides in the midbody. It carries out the reaction L-seryl-[protein] + ATP = O-phospho-L-seryl-[protein] + ADP + H(+). It catalyses the reaction L-threonyl-[protein] + ATP = O-phospho-L-threonyl-[protein] + ADP + H(+). Its function is as follows. Serine/threonine-protein kinase which mediates both meiotic and mitotic chromosome segregation. Required for histone H3 'Ser-10' phosphorylation. Phosphorylates tlk-1 and zen-4. This is Aurora/IPL1-related protein kinase 2 (air-2) from Caenorhabditis briggsae.